The following is a 121-amino-acid chain: Ribosome-binding factor A (121 aa).

The protein belongs to the RbfA family. Monomer. Binds 30S ribosomal subunits, but not 50S ribosomal subunits or 70S ribosomes.

It is found in the cytoplasm. One of several proteins that assist in the late maturation steps of the functional core of the 30S ribosomal subunit. Associates with free 30S ribosomal subunits (but not with 30S subunits that are part of 70S ribosomes or polysomes). Required for efficient processing of 16S rRNA. May interact with the 5'-terminal helix region of 16S rRNA. The sequence is that of Ribosome-binding factor A from Paraburkholderia phytofirmans (strain DSM 17436 / LMG 22146 / PsJN) (Burkholderia phytofirmans).